We begin with the raw amino-acid sequence, 291 residues long: Bifunctional protein FolD (291 aa).

Residues 166-168 (GAS) and Ile-232 contribute to the NADP(+) site.

The protein belongs to the tetrahydrofolate dehydrogenase/cyclohydrolase family. In terms of assembly, homodimer.

The enzyme catalyses (6R)-5,10-methylene-5,6,7,8-tetrahydrofolate + NADP(+) = (6R)-5,10-methenyltetrahydrofolate + NADPH. The catalysed reaction is (6R)-5,10-methenyltetrahydrofolate + H2O = (6R)-10-formyltetrahydrofolate + H(+). It functions in the pathway one-carbon metabolism; tetrahydrofolate interconversion. Functionally, catalyzes the oxidation of 5,10-methylenetetrahydrofolate to 5,10-methenyltetrahydrofolate and then the hydrolysis of 5,10-methenyltetrahydrofolate to 10-formyltetrahydrofolate. This is Bifunctional protein FolD from Photorhabdus laumondii subsp. laumondii (strain DSM 15139 / CIP 105565 / TT01) (Photorhabdus luminescens subsp. laumondii).